A 622-amino-acid polypeptide reads, in one-letter code: MSVSTPSELDALIEQATSESIPNGDLDLPIALEISDVLRSRRVNPKDSMRCIKKRILNTADNPNTQLSSWKLTNICVKNGGTPFIKEICSREFMDTMEHVILREDSNEELSELVKTILYELYVAFKNDSQLNYVAKVYDKLISRGIKFPEKLTLSNSPTAMFDSKTPADWIDSDACMICSKKFSLLNRKHHCRSCGGVFCQEHSSNSIPLPDLGIYEPVRVCDSCFEDYDLKRHDDSKKSKKHRHKRKKDRDYSTPEDEEELIRKAIELSLKESRNSASSEPIVPVVESKNEVKRQEIEEEEDPDLKAAIQESLREAEEAKLRSERQKASRQMQPQQPSPQPQPIHSVDLSDEEKDSIYMFASLVEKMKSRPLNEILEDSKLQNLAQRVFASKARLNYALNDKAQKYNTLIEMNGKISEIMNIYDRLLEQQLQSINLSQQYTLPQVPSDPYNYLTENVQNPAESYQTPPLQQLSSHQYKPQQDVSRQQSVKANSSPTTNIDHLKTIDVTPHAQQKPQSHVELAPSDPPYPKEEAEDEGTQAVQDEESSTQESRERPYPVETENGETSINKRPQGITRYDFPTVPARKFVQPESTVPLPASSSEIPIKEERPPSPQEELLIEL.

The region spanning 18–149 is the VHS domain; the sequence is SESIPNGDLD…KLISRGIKFP (132 aa). Ser-157 is subject to Phosphoserine. The segment at 170–230 adopts an FYVE-type; atypical zinc-finger fold; that stretch reads WIDSDACMIC…VCDSCFEDYD (61 aa). Positions 176, 179, 192, 195, 200, 203, 222, and 225 each coordinate Zn(2+). The tract at residues 236-260 is disordered; that stretch reads DSKKSKKHRHKRKKDRDYSTPEDEE. The segment covering 239 to 249 has biased composition (basic residues); it reads KSKKHRHKRKK. Residues 258-277 enclose the UIM 1 domain; that stretch reads DEEELIRKAIELSLKESRNS. A Glycyl lysine isopeptide (Lys-Gly) (interchain with G-Cter in ubiquitin) cross-link involves residue Lys-294. In terms of domain architecture, UIM 2 spans 301 to 320; that stretch reads EEDPDLKAAIQESLREAEEA. The span at 317–328 shows a compositional bias: basic and acidic residues; sequence AEEAKLRSERQK. Disordered stretches follow at residues 317–348 and 462–622; these read AEEA…IHSV and AESY…LIEL. A compositionally biased stretch (polar residues) spans 462–500; the sequence is AESYQTPPLQQLSSHQYKPQQDVSRQQSVKANSSPTTNI. The residue at position 495 (Ser-495) is a Phosphoserine. Positions 533–548 are enriched in acidic residues; the sequence is EAEDEGTQAVQDEESS. A Phosphoserine modification is found at Ser-613.

Belongs to the VPS27 family. Component of the ESCRT-0 complex composed of HSE1 and VPS27. Interacts with ENT3 and ENT5, the ESCRT-I subunits VPS23 and VPS28 and with the COPIb subunits SEC27, SEC28 and SEC33. May form a complex composed of VPS27, HSE1 and DOA1. Interacts with DOA1. Interacts with ubiquitin.

The protein localises to the endosome membrane. Functionally, component of the ESCRT-0 complex which is the sorting receptor for ubiquitinated cargo proteins at the multivesicular body (MVB) and recruits ESCRT-I to the MVB outer membrane. Controls exit from the prevacuolar compartment (PVC) in both the forward direction to the vacuole and the return to the Golgi. Allows VPS10 to return to the (trans-Golgi network) TGN from the PVC. Might also function as an alternate adapter in the COPIb clathrin-like coat. The sequence is that of Vacuolar protein sorting-associated protein 27 (VPS27) from Saccharomyces cerevisiae (strain ATCC 204508 / S288c) (Baker's yeast).